The primary structure comprises 282 residues: 2-dehydro-3-deoxyphosphooctonate aldolase (282 aa).

Belongs to the KdsA family.

It localises to the cytoplasm. It carries out the reaction D-arabinose 5-phosphate + phosphoenolpyruvate + H2O = 3-deoxy-alpha-D-manno-2-octulosonate-8-phosphate + phosphate. It participates in carbohydrate biosynthesis; 3-deoxy-D-manno-octulosonate biosynthesis; 3-deoxy-D-manno-octulosonate from D-ribulose 5-phosphate: step 2/3. The protein operates within bacterial outer membrane biogenesis; lipopolysaccharide biosynthesis. In Shewanella sediminis (strain HAW-EB3), this protein is 2-dehydro-3-deoxyphosphooctonate aldolase.